A 186-amino-acid chain; its full sequence is Ribosome-recycling factor (186 aa).

Belongs to the RRF family.

Its subcellular location is the cytoplasm. Functionally, responsible for the release of ribosomes from messenger RNA at the termination of protein biosynthesis. May increase the efficiency of translation by recycling ribosomes from one round of translation to another. The polypeptide is Ribosome-recycling factor (Maricaulis maris (strain MCS10) (Caulobacter maris)).